Consider the following 30-residue polypeptide: Protamine-YII (30 aa).

Positions 1 to 30 are disordered; it reads PRRRTRRASRPVRRRRPRRVSRRRRARRRR.

Testis.

The protein resides in the nucleus. It is found in the chromosome. Protamines substitute for histones in the chromatin of sperm during the haploid phase of spermatogenesis. They compact sperm DNA into a highly condensed, stable and inactive complex. The chain is Protamine-YII from Clupea harengus (Atlantic herring).